The following is a 300-amino-acid chain: Integrin-binding sialoprotein (300 aa).

The segment at 41 to 258 (RFPVQSSSDS…YEQTGAHEYD (218 aa)) is disordered. Residues Ser46, Ser51, Ser59, Ser60, Ser82, and Ser90 each carry the phosphoserine modification. Positions 46–58 (SSSDSSEENGNGD) are enriched in low complexity. The segment covering 59 to 92 (SSEEEEEEEENSNEEENNEENEDSDGNEDEDSEA) has biased composition (acidic residues). Positions 93–102 (ENITLSTTTL) are enriched in polar residues. N-linked (GlcNAc...) asparagine glycosylation is present at Asn94. Positions 125–136 (KAGDIGKKSAKE) are enriched in basic and acidic residues. Residues 137–160 (EESDEDEEEEEENEENEAEVDDNE) show a composition bias toward acidic residues. Phosphoserine is present on Ser139. Polar residues-rich tracts occupy residues 161-173 (QGTN…STEV), 193-202 (VTEAQGTTVA), and 229-243 (ISGT…TTTP). 2 N-linked (GlcNAc...) asparagine glycosylation sites follow: Asn164 and Asn169. Ser266 carries the post-translational modification Phosphoserine. The Integrin-binding motif motif lies at 272 to 274 (RGD). Ser293 bears the Phosphoserine mark. Sulfotyrosine occurs at positions 299 and 300.

Monomer. Interacts with integrins; the interaction promotes cell adhesion.

It localises to the secreted. In terms of biological role, binds tightly to hydroxyapatite. Appears to form an integral part of the mineralized matrix. Probably important to cell-matrix interaction. Promotes adhesion and migration of various cells via the alpha-V/beta-3 integrin receptor (ITGAV:ITGB3). The chain is Integrin-binding sialoprotein (IBSP) from Sus scrofa (Pig).